The sequence spans 303 residues: Sushi domain-containing protein 6 (303 aa).

Residues 1–39 (MCHGRIAPKSTSVFAVASVGHGVFLPLVILCTLLGDGLA) form the signal peptide. Residues 40-104 (SVCPLPPEPE…KPAMEISCRL (65 aa)) form the Sushi domain. Over 40–120 (SVCPLPPEPE…HTSLGVPTLS (81 aa)) the chain is Extracellular. 2 disulfides stabilise this stretch: Cys42–Cys89 and Cys74–Cys102. A helical transmembrane segment spans residues 121-141 (IVASTASSVALILLLVVLFVL). The Cytoplasmic portion of the chain corresponds to 142–303 (LQPKLKSFHH…TDDIPLLKEA (162 aa)). 2 disordered regions span residues 199-237 (VLSE…GQSG) and 263-282 (GSGN…NSDI).

Its subcellular location is the membrane. Functionally, may play a role in growth-suppressive activity and cell death. May be involved in the production of chemokine molecules in umbilical vein endothelial cells (HUVECs) cultured in THP1 monocyte LPS-induced medium. Plays a role in preventing tumor onset. The protein is Sushi domain-containing protein 6 of Homo sapiens (Human).